The following is a 142-amino-acid chain: Alpha-lactalbumin (142 aa).

An N-terminal signal peptide occupies residues 1–19; sequence MMSFVSLLLVGILFHATQA. One can recognise a C-type lysozyme domain in the interval 20-142; sequence EQLTKCEVFQ…KLDQWLCEKL (123 aa). 4 disulfide bridges follow: Cys25/Cys139, Cys47/Cys130, Cys80/Cys96, and Cys92/Cys110. Residues Asn64 and Asn93 are each glycosylated (N-linked (GlcNAc...) asparagine). Residues Lys98, Asp101, Asp103, Asp106, and Asp107 each coordinate Ca(2+).

Belongs to the glycosyl hydrolase 22 family. In terms of assembly, lactose synthase (LS) is a heterodimer of a catalytic component, beta1,4-galactosyltransferase (beta4Gal-T1) and a regulatory component, alpha-lactalbumin (LA). Mammary gland specific. Secreted in milk.

The protein localises to the secreted. Its function is as follows. Regulatory subunit of lactose synthase, changes the substrate specificity of galactosyltransferase in the mammary gland making glucose a good acceptor substrate for this enzyme. This enables LS to synthesize lactose, the major carbohydrate component of milk. In other tissues, galactosyltransferase transfers galactose onto the N-acetylglucosamine of the oligosaccharide chains in glycoproteins. In Capra hircus (Goat), this protein is Alpha-lactalbumin (LALBA).